The following is a 227-amino-acid chain: Isopentenyl-diphosphate Delta-isomerase 1 (227 aa).

Lys36 contributes to the substrate binding site. Mg(2+) is bound by residues His40 and His51. One can recognise a Nudix hydrolase domain in the interval 49 to 199 (LLHRAFSVFL…EIKITPWFKI (151 aa)). Arg70 and Lys74 together coordinate substrate. The active site involves Cys86. Ser87 contacts substrate. Residues Glu146 and Glu148 each coordinate Mg(2+). Glu148 is an active-site residue. Position 176 is an N6-acetyllysine (Lys176). The Microbody targeting signal signature appears at 225 to 227 (YRM).

This sequence belongs to the IPP isomerase type 1 family. As to quaternary structure, monomer. Requires Mg(2+) as cofactor.

It localises to the peroxisome. The enzyme catalyses isopentenyl diphosphate = dimethylallyl diphosphate. It participates in isoprenoid biosynthesis; dimethylallyl diphosphate biosynthesis; dimethylallyl diphosphate from isopentenyl diphosphate: step 1/1. Functionally, catalyzes the 1,3-allylic rearrangement of the homoallylic substrate isopentenyl (IPP) to its highly electrophilic allylic isomer, dimethylallyl diphosphate (DMAPP). This chain is Isopentenyl-diphosphate Delta-isomerase 1 (IDI1), found in Homo sapiens (Human).